A 415-amino-acid chain; its full sequence is Dynein assembly factor with WD repeat domains 1 (415 aa).

WD repeat units lie at residues 90-129 (AHILPLTNVALNKAGSCFITGSYDRTCKVWDTASGEELHT), 132-174 (GHKN…HTFR), 175-214 (GHTAEIVCLSFNPQSTVVATGSMDTTAKLWDIQNGEEVVT), 217-256 (GHLAEIISLSFDTSGDRIITGSFDHTVVVWDASTGRKVHT), 259-298 (GHCAEISSALFNWDCSLILTGSMDKTCMLWDATSGKYVAT), 301-340 (GHDDEILDSCFDYTGKLIATASADGTARVYNATTRKCVTK), 343-384 (GHEG…QVLE), and 386-415 (HTDEIFSCAFNYKGNIVITGSKDNSCRIWR).

It belongs to the WD repeat WDR69 family. In terms of assembly, interacts with IFT46. As to expression, in early mouse embryos, expression is limited to distal, motile ciliated cells of the node.

Its subcellular location is the cytoplasm. The protein resides in the cytoskeleton. It localises to the flagellum basal body. It is found in the flagellum axoneme. Functionally, required for axonemal dynein assembly and ciliary motility in ciliated organs, including Kupffer's vesicle, during embryogenesis. Facilitates the onset of robust cilia motility during development. The protein is Dynein assembly factor with WD repeat domains 1 of Mus musculus (Mouse).